The sequence spans 199 residues: Protein PPP1R35 homolog (199 aa).

Over residues 1 to 11 (MPHKRRNRVHA) the composition is skewed to basic residues. Disordered stretches follow at residues 1–23 (MPHKRRNRVHANQRNFTARRVSV) and 36–60 (ESCNGSHADNSSPDSPKAKEGAMTN). A compositionally biased stretch (polar residues) spans 38-49 (CNGSHADNSSPD).

It belongs to the PPP1R35 family. Interacts with Ana3; this complex is recruited to daughter centrioles before their conversion to centrosomes.

The protein resides in the cytoplasm. Its subcellular location is the cytoskeleton. It localises to the microtubule organizing center. The protein localises to the centrosome. It is found in the centriole. Functionally, participates in the later stages of centriole assembly through the interaction with Ana3 leading to the centriole to centrosome conversion in somatic cells. In Drosophila melanogaster (Fruit fly), this protein is Protein PPP1R35 homolog.